The following is a 179-amino-acid chain: Bacterioferritin (179 aa).

A Ferritin-like diiron domain is found at 1–150 (MAGNREDRKA…NIGSHIKNLG (150 aa)). Fe cation-binding residues include glutamate 23 and glutamate 56. A Fe-coproporphyrin III-binding site is contributed by methionine 57. Fe cation is bound by residues histidine 59, glutamate 99, glutamate 132, and histidine 135.

The protein belongs to the bacterioferritin family. As to quaternary structure, homooligomer of 24 subunits, arranged as 12 dimers, that are packed together to form an approximately spherical molecule with a central cavity, in which large amounts of iron can be deposited. Fe-coproporphyrin III is required as a cofactor. The cofactor is Fe cation.

The enzyme catalyses 4 Fe(2+) + O2 + 4 H(+) = 4 Fe(3+) + 2 H2O. It carries out the reaction Fe(2+)(in) = Fe(2+)(out). In terms of biological role, iron-storage protein, whose ferroxidase center binds Fe(2+), oxidizes it using dioxygen to Fe(3+), and participates in the subsequent Fe(3+) oxide mineral core formation within the central cavity of the BFR protein shell. The protein is Bacterioferritin (bfr) of Desulfovibrio desulfuricans (strain ATCC 27774 / DSM 6949 / MB).